Here is a 353-residue protein sequence, read N- to C-terminus: Ferredoxin--NADP reductase (353 aa).

Residues Thr-25, Glu-44, Gln-52, Tyr-57, Val-97, Phe-132, Asp-298, and Ser-339 each contribute to the FAD site.

This sequence belongs to the ferredoxin--NADP reductase type 2 family. As to quaternary structure, homodimer. It depends on FAD as a cofactor.

It carries out the reaction 2 reduced [2Fe-2S]-[ferredoxin] + NADP(+) + H(+) = 2 oxidized [2Fe-2S]-[ferredoxin] + NADPH. The protein is Ferredoxin--NADP reductase of Chlorobium chlorochromatii (strain CaD3).